The sequence spans 288 residues: Homoserine kinase (288 aa).

78-88 (PLARGLGSSSS) lines the ATP pocket.

Belongs to the GHMP kinase family. Homoserine kinase subfamily.

It is found in the cytoplasm. The catalysed reaction is L-homoserine + ATP = O-phospho-L-homoserine + ADP + H(+). The protein operates within amino-acid biosynthesis; L-threonine biosynthesis; L-threonine from L-aspartate: step 4/5. Catalyzes the ATP-dependent phosphorylation of L-homoserine to L-homoserine phosphate. In Streptococcus mutans serotype c (strain ATCC 700610 / UA159), this protein is Homoserine kinase.